A 1077-amino-acid polypeptide reads, in one-letter code: MTAELQQDDAAGAADGHGSSCQMLLNQLREITGIQDPSFLHEALKASNGDITQAVSLLTDERVKEPSQDTVATEPSEVEGSAANKEVLAKVIDLTHDNKDDLQAAIALSLLESPKIQADGRDLNRMHEATSAETKRSKRKRCEVWGENPNPNDWRRVDGWPVGLKNVGNTCWFSAVIQSLFQLPEFRRLVLSYSLPQNVLENCRSHTEKRNIMFMQELQYLFALMMGSNRKFVDPSAALDLLKGAFRSSEEQQQDVSEFTHKLLDWLEDAFQLAVNVNSPRNKSENPMVQLFYGTFLTEGVREGKPFCNNETFGQYPLQVNGYRNLDECLEGAMVEGDVELLPSDHSVKYGQERWFTKLPPVLTFELSRFEFNQSLGQPEKIHNKLEFPQIIYMDRYMYRSKELIRNKRECIRKLKEEIKILQQKLERYVKYGSGPARFPLPDMLKYVIEFASTKPASESCPPESDTHMTLPLSSVHCSVSDQTSKESTSTESSSQDVESTFSSPEDSLPKSKPLTSSRSSMEMPSQPAPRTVTDEEINFVKTCLQRWRSEIEQDIQDLKTCIASTTQTIEQMYCDPLLRQVPYRLHAVLVHEGQANAGHYWAYIYNQPRQSWLKYNDISVTESSWEEVERDSYGGLRNVSAYCLMYINDKLPYFNAEAAPTESDQMSEVEALSVELKHYIQEDNWRFEQEVEEWEEEQSCKIPQMESSTNSSSQDYSTSQEPSVASSHGVRCLSSEHAVIVKEQTAQAIANTARAYEKSGVEAALSEVMLSPAMQGVILAIAKARQTFDRDGSEAGLIKAFHEEYSRLYQLAKETPTSHSDPRLQHVLVYFFQNEAPKRVVERTLLEQFADKNLSYDERSISIMKVAQAKLKEIGPDDMNMEEYKKWHEDYSLFRKVSVYLLTGLELYQKGKYQEALSYLVYAYQSNAALLMKGPRRGVKESVIALYRRKCLLELNAKAASLFETNDDHSVTEGINVMNELIIPCIHLIINNDISKDDLDAIEVMRNHWCSYLGQDIAENLQLCLGEFLPRLLDPSAEIIVLKEPPTIRPNSPYDLCSRFAAVMESIQGVSTVTVK.

Residues 60 to 80 (DERVKEPSQDTVATEPSEVEG) are disordered. S67 carries the phosphoserine modification. Positions 97 to 116 (DNKDDLQAAIALSLLESPKI) constitute a UIM domain. K99 is covalently cross-linked (Glycyl lysine isopeptide (Lys-Gly) (interchain with G-Cter in SUMO2)). The 489-residue stretch at 162–650 (VGLKNVGNTC…SAYCLMYIND (489 aa)) folds into the USP domain. Catalysis depends on C171, which acts as the Nucleophile. S375 is modified (phosphoserine). The tract at residues 477 to 535 (HCSVSDQTSKESTSTESSSQDVESTFSSPEDSLPKSKPLTSSRSSMEMPSQPAPRTVTD) is disordered. A compositionally biased stretch (low complexity) spans 481–501 (SDQTSKESTSTESSSQDVEST). The span at 514 to 524 (PLTSSRSSMEM) shows a compositional bias: polar residues. Phosphoserine is present on S550. H600 functions as the Proton acceptor in the catalytic mechanism. Residues 697 to 728 (EEQSCKIPQMESSTNSSSQDYSTSQEPSVASS) form a disordered region. Positions 707–724 (ESSTNSSSQDYSTSQEPS) are enriched in low complexity. S714 bears the Phosphoserine mark. K759 is covalently cross-linked (Glycyl lysine isopeptide (Lys-Gly) (interchain with G-Cter in SUMO2)). Position 1048 is a phosphothreonine (T1048).

Belongs to the peptidase C19 family. USP28 subfamily. As to quaternary structure, interacts with ZNF304. Interacts with PRKD1. Interacts with TP53BP1. Interacts with isoform 1 of FBXW7; following DNA damage, dissociates from FBXW7 leading to degradation of MYC. Degraded upon nickel ion level or hypoxia exposure. Post-translationally, phosphorylated upon DNA damage at Ser-67 and Ser-714, by ATM or ATR. Phosphorylated by PRKD1.

It localises to the nucleus. The protein resides in the nucleoplasm. It catalyses the reaction Thiol-dependent hydrolysis of ester, thioester, amide, peptide and isopeptide bonds formed by the C-terminal Gly of ubiquitin (a 76-residue protein attached to proteins as an intracellular targeting signal).. Functionally, deubiquitinase involved in DNA damage response checkpoint and MYC proto-oncogene stability. Involved in DNA damage induced apoptosis by specifically deubiquitinating proteins of the DNA damage pathway such as CLSPN. Also involved in G2 DNA damage checkpoint, by deubiquitinating CLSPN, and preventing its degradation by the anaphase promoting complex/cyclosome (APC/C). In contrast, it does not deubiquitinate PLK1. Specifically deubiquitinates MYC in the nucleoplasm, leading to prevent MYC degradation by the proteasome: acts by specifically interacting with isoform 1 of FBXW7 (FBW7alpha) in the nucleoplasm and counteracting ubiquitination of MYC by the SCF(FBW7) complex. In contrast, it does not interact with isoform 4 of FBXW7 (FBW7gamma) in the nucleolus, allowing MYC degradation and explaining the selective MYC degradation in the nucleolus. Deubiquitinates ZNF304, hence preventing ZNF304 degradation by the proteasome and leading to the activated KRAS-mediated promoter hypermethylation and transcriptional silencing of tumor suppressor genes (TSGs) in a subset of colorectal cancers (CRC) cells. This chain is Ubiquitin carboxyl-terminal hydrolase 28 (USP28), found in Homo sapiens (Human).